The chain runs to 1278 residues: Dynactin subunit 1 (1278 aa).

The interval M1–R25 is disordered. The CAP-Gly domain maps to G48–R90. The interval G100–Q223 is disordered. Residues D102–S114 are compositionally biased toward polar residues. T108 is subject to Phosphothreonine. The segment covering S129–P152 has biased composition (basic residues). T145, T146, and T147 each carry phosphothreonine; by SLK. Positions A161–S184 are enriched in low complexity. S179 carries the phosphoserine; by PLK1 modification. Phosphoserine; by CDK1 is present on S212. Coiled-coil stretches lie at residues P213–Q547, L943–R1049, and S1182–V1211. The span at S214–Q223 shows a compositional bias: basic and acidic residues. The segment at E911–S1278 is interaction with HPS6.

It belongs to the dynactin 150 kDa subunit family. In terms of assembly, monomer and homodimer. Subunit of dynactin, a multiprotein complex part of a tripartite complex with dynein and a adapter, such as BICDL1, BICD2 or HOOK3. The dynactin complex is built around ACTR1A/ACTB filament and consists of an actin-related filament composed of a shoulder domain, a pointed end and a barbed end. Its length is defined by its flexible shoulder domain. The soulder is composed of 2 DCTN1 subunits, 4 DCTN2 and 2 DCTN3. DCTN1/p150(glued) binds directly to microtubules and to cytoplasmic dynein. The 4 DCNT2 (via N-terminus) bind the ACTR1A filament and act as molecular rulers to determine the length. The pointed end is important for binding dynein-dynactin cargo adapters. Consists of 4 subunits: ACTR10, DCNT4, DCTN5 and DCTN6. The barbed end is composed of a CAPZA1:CAPZB heterodimers, which binds ACTR1A/ACTB filament and dynactin and stabilizes dynactin. Interacts with the C-terminus of MAPRE1, MAPRE2 and MAPRE3. Interacts (via C-terminus) with SNX6. Interacts with CLN3, DYNAP, ECPAS and FBXL5. Interacts with MISP; this interaction regulates its distribution at the cell cortex. Interacts with CEP131. Interacts with CEP126. Interacts with CLIP1. Interacts with dynein intermediate chain and dynein heavy chain. Interacts with PLK1 (via POLO-box domain). Interacts with TBCB. Binds preferentially to tyrosinated microtubules than to detyrosinated microtubules. Interacts with PARD6A. Interacts with HPS6. Interacts with KIF3A. Interacts with BICD2. Interacts with DST (isoform 9). Interacts with DST (isoform 1). Identified in a complex with MREG and RILP. Interacts with BCCIP (isoform 2/alpha). Interacts with DCDC1. Interacts with AKNA. Interacts with DYNC1I2. Interacts with RUFY3 and RUFY4. In terms of processing, ubiquitinated by a SCF complex containing FBXL5, leading to its degradation by the proteasome. Phosphorylation by SLK at Thr-145, Thr-146 and Thr-147 targets DCTN1 to the centrosome. It is uncertain if SLK phosphorylates all three threonines or one or two of them. PLK1-mediated phosphorylation at Ser-179 is essential for its localization in the nuclear envelope, promotes its dissociation from microtubules during early mitosis and positively regulates nuclear envelope breakdown during prophase. In terms of tissue distribution, brain.

It localises to the cytoplasm. The protein localises to the cytoskeleton. Its subcellular location is the microtubule organizing center. The protein resides in the centrosome. It is found in the centriole. It localises to the spindle. The protein localises to the nucleus envelope. Its subcellular location is the cell cortex. Part of the dynactin complex that activates the molecular motor dynein for ultra-processive transport along microtubules. Plays a key role in dynein-mediated retrograde transport of vesicles and organelles along microtubules by recruiting and tethering dynein to microtubules. Binds to both dynein and microtubules providing a link between specific cargos, microtubules and dynein. Essential for targeting dynein to microtubule plus ends, recruiting dynein to membranous cargos and enhancing dynein processivity (the ability to move along a microtubule for a long distance without falling off the track). Can also act as a brake to slow the dynein motor during motility along the microtubule. Can regulate microtubule stability by promoting microtubule formation, nucleation and polymerization and by inhibiting microtubule catastrophe in neurons. Inhibits microtubule catastrophe by binding both to microtubules and to tubulin, leading to enhanced microtubule stability along the axon. Plays a role in metaphase spindle orientation. Plays a role in centriole cohesion and subdistal appendage organization and function. Its recruitment to the centriole in a KIF3A-dependent manner is essential for the maintenance of centriole cohesion and the formation of subdistal appendage. Also required for microtubule anchoring at the mother centriole. Plays a role in primary cilia formation. In Homo sapiens (Human), this protein is Dynactin subunit 1.